The primary structure comprises 139 residues: Protein cornichon homolog 4 (139 aa).

Helical transmembrane passes span 5–25 (VFLF…YFII), 57–77 (IVTV…NLPV), and 118–138 (LGFY…ALIN).

The protein belongs to the cornichon family. In terms of assembly, interacts with Sec23/24 complex components SEC24B and SEC24D. Interacts with CCR5. Interacts with ADRB2 in the early secretory pathway.

The protein localises to the membrane. The protein resides in the endoplasmic reticulum. Its subcellular location is the endoplasmic reticulum-Golgi intermediate compartment. Functionally, involved in G protein-coupled receptors (GPCRs) trafficking from the endoplasmic reticulum to the cell surface; it promotes the exit of GPCRs from the early secretory pathway, likely through interaction with the COPII machinery. This is Protein cornichon homolog 4 (Cnih4) from Mus musculus (Mouse).